A 174-amino-acid chain; its full sequence is Translation initiation factor IF-3 (174 aa).

Belongs to the IF-3 family. Monomer.

The protein localises to the cytoplasm. IF-3 binds to the 30S ribosomal subunit and shifts the equilibrium between 70S ribosomes and their 50S and 30S subunits in favor of the free subunits, thus enhancing the availability of 30S subunits on which protein synthesis initiation begins. The sequence is that of Translation initiation factor IF-3 from Azorhizobium caulinodans (strain ATCC 43989 / DSM 5975 / JCM 20966 / LMG 6465 / NBRC 14845 / NCIMB 13405 / ORS 571).